We begin with the raw amino-acid sequence, 100 residues long: Small ribosomal subunit protein uS14c (100 aa).

The protein belongs to the universal ribosomal protein uS14 family. In terms of assembly, part of the 30S ribosomal subunit.

It is found in the plastid. It localises to the chloroplast. Functionally, binds 16S rRNA, required for the assembly of 30S particles. This chain is Small ribosomal subunit protein uS14c, found in Cryptomeria japonica (Japanese cedar).